The primary structure comprises 268 residues: uncharacterized protein (268 aa).

This is an uncharacterized protein from Haemophilus influenzae (strain ATCC 51907 / DSM 11121 / KW20 / Rd).